The primary structure comprises 477 residues: Ankyrin repeat, SAM and basic leucine zipper domain-containing protein 1 (477 aa).

Residues 1 to 24 form a disordered region; sequence MAASSLWGPAVAGGGESSESEDDG. Phosphoserine occurs at positions 17, 18, and 20. ANK repeat units follow at residues 45 to 74, 78 to 107, 110 to 144, 148 to 177, 181 to 210, and 214 to 243; these read EKNE…SVDS, YGWT…NASF, DKQT…DPNV, RQMT…EVNA, NGYT…NKML, and DGKT…PLEG. Positions 272–334 constitute an SAM domain; that stretch reads SYTAFGELDL…KILSALKELM (63 aa).

As to quaternary structure, interacts with DDX4, PIWIL1, RANBP9 and TDRD1.

Its subcellular location is the cytoplasm. Plays a central role during spermatogenesis by repressing transposable elements and preventing their mobilization, which is essential for the germline integrity. Acts via the piRNA metabolic process, which mediates the repression of transposable elements during meiosis by forming complexes composed of piRNAs and Piwi proteins and governs the methylation and subsequent repression of transposons. Its association with pi-bodies suggests a participation in the primary piRNAs metabolic process. Required prior to the pachytene stage to facilitate the production of multiple types of piRNAs, including those associated with repeats involved in the regulation of retrotransposons. May act by mediating protein-protein interactions during germ cell maturation. This chain is Ankyrin repeat, SAM and basic leucine zipper domain-containing protein 1 (ASZ1), found in Echinops telfairi (Lesser hedgehog tenrec).